Consider the following 151-residue polypeptide: uncharacterized protein (151 aa).

This is an uncharacterized protein from Methanocaldococcus jannaschii (strain ATCC 43067 / DSM 2661 / JAL-1 / JCM 10045 / NBRC 100440) (Methanococcus jannaschii).